A 152-amino-acid polypeptide reads, in one-letter code: Phospholipase A2 GL16-1 (152 aa).

The signal sequence occupies residues 1–21 (MNPAHLLVLLAVCVSLLGAST). A propeptide spanning residues 22 to 27 (IPPLPL) is cleaved from the precursor. 7 disulfides stabilise this stretch: C38–C104, C54–C151, C56–C72, C71–C132, C78–C125, C88–C118, and C111–C123. Ca(2+) is bound by residues Y55, G57, and G59. H75 is an active-site residue. D76 provides a ligand contact to Ca(2+). D126 is an active-site residue.

The protein belongs to the phospholipase A2 family. Group I subfamily. The cofactor is Ca(2+).

The protein resides in the secreted. It carries out the reaction a 1,2-diacyl-sn-glycero-3-phosphocholine + H2O = a 1-acyl-sn-glycero-3-phosphocholine + a fatty acid + H(+). Its function is as follows. PA2 catalyzes the calcium-dependent hydrolysis of the 2-acyl groups in 3-sn-phosphoglycerides. This is Phospholipase A2 GL16-1 from Laticauda semifasciata (Black-banded sea krait).